The following is a 166-amino-acid chain: CDP-archaeol synthase (166 aa).

5 consecutive transmembrane segments (helical) span residues 1 to 21 (MPII…LVAN), 55 to 75 (LLVA…FLGI), 78 to 98 (IYVS…GAFI), 110 to 130 (AIGL…IISK), and 131 to 151 (ISLN…LHIL).

Belongs to the CDP-archaeol synthase family. Mg(2+) is required as a cofactor.

Its subcellular location is the cell membrane. The catalysed reaction is 2,3-bis-O-(geranylgeranyl)-sn-glycerol 1-phosphate + CTP + H(+) = CDP-2,3-bis-O-(geranylgeranyl)-sn-glycerol + diphosphate. The protein operates within membrane lipid metabolism; glycerophospholipid metabolism. Its function is as follows. Catalyzes the formation of CDP-2,3-bis-(O-geranylgeranyl)-sn-glycerol (CDP-archaeol) from 2,3-bis-(O-geranylgeranyl)-sn-glycerol 1-phosphate (DGGGP) and CTP. This reaction is the third ether-bond-formation step in the biosynthesis of archaeal membrane lipids. This is CDP-archaeol synthase from Sulfurisphaera tokodaii (strain DSM 16993 / JCM 10545 / NBRC 100140 / 7) (Sulfolobus tokodaii).